The following is a 126-amino-acid chain: Flagellar protein FliT (126 aa).

Residues 1 to 50 (MVSPHRLLKDYQQLLSLSQKILHLAISGQWDTLVEQEIVYVQSVEGLVNT) are required for homodimerization. The interval 60-98 (MRLHLRQILQEVMDNEAKVKQLLQKRMDELSSLMGQSLK) is fliD binding.

This sequence belongs to the FliT family. Homodimer. Interacts with FliD and FlhC.

Its subcellular location is the cytoplasm. The protein localises to the cytosol. Its function is as follows. Dual-function protein that regulates the transcription of class 2 flagellar operons and that also acts as an export chaperone for the filament-capping protein FliD. As a transcriptional regulator, acts as an anti-FlhDC factor; it directly binds FlhC, thus inhibiting the binding of the FlhC/FlhD complex to class 2 promoters, resulting in decreased expression of class 2 flagellar operons. As a chaperone, effects FliD transition to the membrane by preventing its premature polymerization, and by directing it to the export apparatus. This is Flagellar protein FliT from Pectobacterium atrosepticum (strain SCRI 1043 / ATCC BAA-672) (Erwinia carotovora subsp. atroseptica).